Reading from the N-terminus, the 210-residue chain is Large ribosomal subunit protein bL25 (210 aa).

Residues Ile186–Ser210 are disordered. Residues Asn198–Ser210 are compositionally biased toward low complexity.

The protein belongs to the bacterial ribosomal protein bL25 family. CTC subfamily. Part of the 50S ribosomal subunit; part of the 5S rRNA/L5/L18/L25 subcomplex. Contacts the 5S rRNA. Binds to the 5S rRNA independently of L5 and L18.

Its function is as follows. This is one of the proteins that binds to the 5S RNA in the ribosome where it forms part of the central protuberance. This Ehrlichia chaffeensis (strain ATCC CRL-10679 / Arkansas) protein is Large ribosomal subunit protein bL25.